A 202-amino-acid polypeptide reads, in one-letter code: Securin (202 aa).

A2 carries the N-acetylalanine modification. The interval 35 to 94 (LDGRSQVSTPRFGKTFDAPPALPKATRKALGTVNRATEKSVKTKGPLKQKQPSFSAKKMT) is disordered. The D-box motif lies at 61 to 64 (RKAL). 2 consecutive short sequence motifs (TEK-box) follow at residues 71–73 (TEK) and 94–96 (TEK). Positions 163–173 (PPSPVRMPSPP) match the SH3-binding motif. Phosphoserine; by CDK1 is present on S165.

Belongs to the securin family. In terms of assembly, interacts with RPS10 and DNAJA1. Interacts with the caspase-like ESPL1, and prevents its protease activity probably by covering its active site. Interacts with TP53 and blocks its activity probably by blocking its binding to DNA. Interacts with the Ku 70 kDa subunit of ds-DNA kinase. Interacts with PTTG1IP. In terms of processing, phosphorylated at Ser-165 by CDK1 during mitosis. Post-translationally, phosphorylated in vitro by ds-DNA kinase. Ubiquitinated through 'Lys-11' linkage of ubiquitin moieties by the anaphase promoting complex (APC) at the onset of anaphase, conducting to its degradation. 'Lys-11'-linked ubiquitination is mediated by the E2 ligase UBE2C/UBCH10.

It localises to the cytoplasm. It is found in the nucleus. Regulatory protein, which plays a central role in chromosome stability, in the p53/TP53 pathway, and DNA repair. Probably acts by blocking the action of key proteins. During the mitosis, it blocks Separase/ESPL1 function, preventing the proteolysis of the cohesin complex and the subsequent segregation of the chromosomes. At the onset of anaphase, it is ubiquitinated, conducting to its destruction and to the liberation of ESPL1. Its function is however not limited to a blocking activity, since it is required to activate ESPL1. Negatively regulates the transcriptional activity and related apoptosis activity of TP53. The negative regulation of TP53 may explain the strong transforming capability of the protein when it is overexpressed. May also play a role in DNA repair via its interaction with Ku, possibly by connecting DNA damage-response pathways with sister chromatid separation. This is Securin (PTTG1) from Gorilla gorilla gorilla (Western lowland gorilla).